Reading from the N-terminus, the 323-residue chain is AA9 family lytic polysaccharide monooxygenase B (323 aa).

The N-terminal stretch at 1–18 (MKSFTLTTLAALAGNAAA) is a signal peptide. The Cu(2+) site is built by H19 and H97. A disulfide bridge links C56 with C191. Residues H177 and Q186 each contribute to the O2 site. Y188 is a Cu(2+) binding site. A CBM1 domain is found at 286 to 323 (CTVQKYQQCGGQGYTGCTNCASGSTCSAVSPPYYSQCV).

The protein belongs to the polysaccharide monooxygenase AA9 family. Cu(2+) is required as a cofactor.

It is found in the secreted. The catalysed reaction is [(1-&gt;4)-beta-D-glucosyl]n+m + reduced acceptor + O2 = 4-dehydro-beta-D-glucosyl-[(1-&gt;4)-beta-D-glucosyl]n-1 + [(1-&gt;4)-beta-D-glucosyl]m + acceptor + H2O.. With respect to regulation, is able to utilize various natural phenolic compounds as reducing agents. Most of these reducing agents are present in plants, either free or as lignin building blocks, such as sinapic acid, or as flavonoids such as catechin and dopamine. Phenolic compounds with 1,2-benzenediol and 1,2,3-benzenetriol moieties yield the highest release of oxidized and non-oxidized glucooligosaccharides from cellulose compared to monophenols or sulfur-containing compounds. In terms of biological role, lytic polysaccharide monooxygenase (LPMO) that depolymerizes crystalline and amorphous polysaccharides via the oxidation of scissile alpha- or beta-(1-4)-glycosidic bonds, yielding C1 oxidation products. Catalysis by LPMOs requires the reduction of the active-site copper from Cu(II) to Cu(I) by a reducing agent and H(2)O(2) or O(2) as a cosubstrate. Is active on regenerated amorphous cellulose (RAC). This is AA9 family lytic polysaccharide monooxygenase B from Thermothelomyces thermophilus (strain ATCC 42464 / BCRC 31852 / DSM 1799) (Sporotrichum thermophile).